Reading from the N-terminus, the 393-residue chain is S-adenosylmethionine synthase (393 aa).

Glutamate 10 contacts Mg(2+). Histidine 16 lines the ATP pocket. Glutamate 44 is a K(+) binding site. Positions 57 and 100 each coordinate L-methionine. ATP-binding positions include 168-170, 236-239, aspartate 247, 253-254, alanine 270, lysine 274, and lysine 278; these read DGK, SGRF, and RK. Aspartate 247 lines the L-methionine pocket. An L-methionine-binding site is contributed by lysine 278.

This sequence belongs to the AdoMet synthase family. As to quaternary structure, homotetramer. It depends on Mn(2+) as a cofactor. The cofactor is Mg(2+). Co(2+) is required as a cofactor. K(+) serves as cofactor.

The protein localises to the cytoplasm. It carries out the reaction L-methionine + ATP + H2O = S-adenosyl-L-methionine + phosphate + diphosphate. It functions in the pathway amino-acid biosynthesis; S-adenosyl-L-methionine biosynthesis; S-adenosyl-L-methionine from L-methionine: step 1/1. Catalyzes the formation of S-adenosylmethionine from methionine and ATP. The reaction comprises two steps that are both catalyzed by the same enzyme: formation of S-adenosylmethionine (AdoMet) and triphosphate, and subsequent hydrolysis of the triphosphate. This Musa acuminata (Banana) protein is S-adenosylmethionine synthase (METK).